Reading from the N-terminus, the 532-residue chain is uncharacterized protein (532 aa).

The next 6 helical transmembrane spans lie at 7–26 (HSSY…LGRI), 30–52 (GLSL…GVII), 59–77 (FGLV…PGFF), 87–109 (LIII…KYAF), 116–134 (VVGL…AVAI), and 139–161 (SPLA…ILFV). 2 consecutive RCK C-terminal domains span residues 179 to 262 (LEIE…LVGE) and 263 to 346 (REEG…LLGN). Helical transmembrane passes span 356–378 (FFPI…SFPG), 388–410 (GGVL…LWSM), 446–468 (GLLL…AFVG), and 509–531 (YATV…ATVV).

The protein belongs to the AAE transporter (TC 2.A.81) family.

It localises to the cell membrane. This is an uncharacterized protein from Bacteroides fragilis (strain YCH46).